The following is a 627-amino-acid chain: uncharacterized protein (627 aa).

2 disordered regions span residues 441–466 (EAVP…QGEN) and 608–627 (DLRG…TEDR). Positions 615-627 (DYERGKGESTEDR) are enriched in basic and acidic residues.

This is an uncharacterized protein from Homo sapiens (Human).